The chain runs to 98 residues: DNA-binding protein Fis (98 aa).

Residues 74–93 (QTRAALMMGINRGTLRKKLK) constitute a DNA-binding region (H-T-H motif).

The protein belongs to the transcriptional regulatory Fis family. As to quaternary structure, homodimer.

Its function is as follows. Activates ribosomal RNA transcription. Plays a direct role in upstream activation of rRNA promoters. This is DNA-binding protein Fis from Pectobacterium atrosepticum (strain SCRI 1043 / ATCC BAA-672) (Erwinia carotovora subsp. atroseptica).